A 188-amino-acid chain; its full sequence is RWD domain-containing protein 4 (188 aa).

Serine 2 carries the N-acetylserine modification. The region spanning 9-111 is the RWD domain; it reads MELEALRSIY…EYAKDNKEQF (103 aa). The segment at 132 to 167 is disordered; that stretch reads TPNTAPSSKKKDKKEQLSKAQKRKLADKTDHKGELP. Positions 155-166 are enriched in basic and acidic residues; sequence KLADKTDHKGEL.

This is RWD domain-containing protein 4 (RWDD4) from Homo sapiens (Human).